Consider the following 521-residue polypeptide: Acetyl-CoA hydrolase (521 aa).

A CoA-binding site is contributed by 276 to 280 (GIGNI). Glu-301 (5-glutamyl coenzyme A thioester intermediate) is an active-site residue. Residues Asn-391 and Gly-395 each contribute to the CoA site.

It belongs to the acetyl-CoA hydrolase/transferase family.

The protein localises to the cytoplasm. It catalyses the reaction acetyl-CoA + H2O = acetate + CoA + H(+). Functionally, presumably involved in regulating the intracellular acetyl-CoA pool for fatty acid and cholesterol synthesis and fatty acid oxidation. In Schizosaccharomyces pombe (strain 972 / ATCC 24843) (Fission yeast), this protein is Acetyl-CoA hydrolase (ach1).